Consider the following 398-residue polypeptide: Type III polyketide synthase pspB (398 aa).

CoA is bound by residues Lys47 and 47–54 (KLLQINRS). The active-site Nucleophile is the Cys152. Substrate is bound at residue 214 to 215 (SD). CoA-binding positions include Leu267, Gly321, 321–324 (GGEA), and Ala324.

Belongs to the thiolase-like superfamily. Chalcone/stilbene synthases family. Homodimer.

The enzyme catalyses 11 malonyl-CoA + acetyl-CoA + S-adenosyl-L-methionine + 12 NADPH + 22 H(+) = soppiline B + S-adenosyl-L-homocysteine + 12 CO2 + 12 NADP(+) + 12 CoA + 8 H2O. It functions in the pathway secondary metabolite biosynthesis. Functionally, type III polyketide synthase; part of the gene cluster that mediates the biosynthesis of the alkylresorcinols called soppilines. The biosynthesis starts with the HR-PKS pspA-catalyzed carbon chain assembly through nine chain elongation cycles, using acetyl CoA and malonyl CoA as a starter and extender units, respectively, to produce the polyketide soppiline A. In the first round, the KR, DH, and CMeT domains work to produce 2-methyl-2-butenyl thioester. In rounds 2 to 5, the KR, DH, and ER domains fully catalyze the reduction of the elongated beta-ketothioester, resulting in the insertion of eight methylene units. The unusual Z,E,Z-triene motif is likely constructed during rounds 6 to 8. Typically, the DH domain introduces a double bond at an alpha,beta-position of an elongated polyketide chain, with the dehydration of a beta-hydroxy group. The last extension cycle would be carried out with L-oriented beta-ketoreduction by the KR domain to produce beta-hydroxy carboxylic acid soppiline A. The type III PKS pspB intercepts the elongated polyketide chain at round 8 from the HR-PKS pspA, followed by a tri-keto extension and decarboxylative aldol cyclization to produce 1,3,5-trisubstituted alkylresorcinol soppiline B. Subsequently, the cytochrome P450 monooxygenase pspC catalyzes three-step oxidations at the C-4 methyl group to carboxylic acid to yield soppiline C. The chain is Type III polyketide synthase pspB from Penicillium soppii.